Here is a 432-residue protein sequence, read N- to C-terminus: Adenylosuccinate synthetase (432 aa).

GTP is bound by residues 13–19 (GDEGKGK) and 41–43 (GHT). The active-site Proton acceptor is D14. Residues D14 and G41 each contribute to the Mg(2+) site. IMP is bound by residues 14–17 (DEGK), 39–42 (NAGH), T130, R144, Q225, T240, and R304. H42 functions as the Proton donor in the catalytic mechanism. 300–306 (AVTGRPR) contacts substrate. Residues R306, 332-334 (KLD), and 415-417 (STG) each bind GTP.

Belongs to the adenylosuccinate synthetase family. As to quaternary structure, homodimer. Mg(2+) serves as cofactor.

It is found in the cytoplasm. It catalyses the reaction IMP + L-aspartate + GTP = N(6)-(1,2-dicarboxyethyl)-AMP + GDP + phosphate + 2 H(+). It participates in purine metabolism; AMP biosynthesis via de novo pathway; AMP from IMP: step 1/2. Functionally, plays an important role in the de novo pathway of purine nucleotide biosynthesis. Catalyzes the first committed step in the biosynthesis of AMP from IMP. This is Adenylosuccinate synthetase from Actinobacillus pleuropneumoniae serotype 7 (strain AP76).